The following is a 383-amino-acid chain: D-alanine--D-alanine ligase (383 aa).

Residues 164-373 (KLAFQAAGLE…YSALIDELIT (210 aa)) enclose the ATP-grasp domain. 196–251 (VAELGFPVFVKPARAGSSFGITRVDEPSQLDAAIATAREHDLKLVVEAGIDGREIE) contributes to the ATP binding site. Mg(2+) contacts are provided by aspartate 327, glutamate 340, and asparagine 342.

Belongs to the D-alanine--D-alanine ligase family. Requires Mg(2+) as cofactor. Mn(2+) is required as a cofactor.

Its subcellular location is the cytoplasm. It catalyses the reaction 2 D-alanine + ATP = D-alanyl-D-alanine + ADP + phosphate + H(+). It participates in cell wall biogenesis; peptidoglycan biosynthesis. Functionally, cell wall formation. The sequence is that of D-alanine--D-alanine ligase from Kocuria rhizophila (strain ATCC 9341 / DSM 348 / NBRC 103217 / DC2201).